The sequence spans 411 residues: Intracellular hyaluronan-binding protein 4 (411 aa).

A phosphoserine mark is found at serine 7 and serine 36. The stretch at 42–62 (LREAEHRRQQQLQRKRRDEAA) forms a coiled coil. The interval 42–271 (LREAEHRRQQ…ECQGTLDEES (230 aa)) is disordered. Arginine 70 carries the omega-N-methylarginine modification. Serine 74 is modified (phosphoserine). A compositionally biased stretch (basic and acidic residues) spans 87–97 (GRRESQKERKS). Serine 108 carries the phosphoserine modification. 2 stretches are compositionally biased toward basic and acidic residues: residues 138–181 (VLER…DRPL) and 205–229 (DSFD…RMED). Residues lysine 212 and lysine 274 each participate in a glycyl lysine isopeptide (Lys-Gly) (interchain with G-Cter in SUMO1); alternate cross-link. Residues lysine 212 and lysine 274 each participate in a glycyl lysine isopeptide (Lys-Gly) (interchain with G-Cter in SUMO2); alternate cross-link. Positions 279-301 (EVEEENQVQEMTLDEWKNLQEQT) form a coiled coil. Positions 296–313 (NLQEQTRPKPEFNIRKPE) are enriched in basic and acidic residues. The disordered stretch occupies residues 296-318 (NLQEQTRPKPEFNIRKPESTVPS). A Glycyl lysine isopeptide (Lys-Gly) (interchain with G-Cter in SUMO1); alternate cross-link involves residue lysine 334. A Glycyl lysine isopeptide (Lys-Gly) (interchain with G-Cter in SUMO2); alternate cross-link involves residue lysine 334. Phosphothreonine; by PKC is present on residues threonine 352 and threonine 373. The disordered stretch occupies residues 358-411 (NFGNLPRPGRGARGSTRGGRGRMRRTENYGPRAEVVTQDVAPNPDDPEDFPALA). A compositionally biased stretch (acidic residues) spans 402–411 (DDPEDFPALA).

The protein belongs to the SERBP1-HABP4 family. As to quaternary structure, associates with ribosomes; promoting ribosome stabilization. Interacts with EEF2/eEF2; promoting ribosome stabilization. Interacts with FMR1. Interacts with FXR1 and FXR2. Interacts with CHD3 (via C-terminus). Interacts (via C-terminus) with RACK1. Interacts with p53/TP53. Interacts (via N-terminus) with SRSF9; this interaction is direct. Interacts with SYNCRIP; this interaction is direct. Interacts with MEF2C (via N-terminus); this interaction decreases DNA-binding activity of MEF2C in myocardial cells in response to mechanical stress. Interacts with PRMT1 (via N-terminus). Interacts with SPIN1. In terms of processing, phosphorylated by phorbol 12-myristate 13-acetate (PMA)-activated PKC isoforms at Thr-352 and Thr-373. Post-translationally, methylated. Methylation is decreased by phorbol 12-myristate 13-acetate (PMA)-activated PKC, in vitro. As to expression, expressed in adult heart, brain, liver, kidney, testis, and in various embryonic tissues, but not in adult spleen, lung or skeletal muscle.

It localises to the nucleus. It is found in the cytoplasm. Its subcellular location is the stress granule. The protein resides in the sarcoplasm. The protein localises to the nuclear body. It localises to the nucleolus. It is found in the nucleus speckle. Its subcellular location is the cajal body. The protein resides in the gem. Its function is as follows. Ribosome-binding protein that promotes ribosome hibernation, a process during which ribosomes are stabilized in an inactive state and preserved from proteasomal degradation. Acts via its association with EEF2/eEF2 factor at the A-site of the ribosome, promoting ribosome stabilization in an inactive state compatible with storage. Plays a key role in ribosome hibernation in the mature oocyte by promoting ribosome stabilization. Ribosomes, which are produced in large quantities during oogenesis, are stored and translationally repressed in the oocyte and early embryo. Also binds RNA, regulating transcription and pre-mRNA splicing. Binds (via C-terminus) to poly(U) RNA. Seems to play a role in PML-nuclear bodies formation. Negatively regulates DNA-binding activity of the transcription factor MEF2C in myocardial cells in response to mechanical stress. This chain is Intracellular hyaluronan-binding protein 4, found in Mus musculus (Mouse).